A 192-amino-acid polypeptide reads, in one-letter code: Lipid A acyltransferase PagP (192 aa).

The signal sequence occupies residues 1–26; the sequence is MTVVNKSFLTILIFFCQILFPLNASA. Catalysis depends on residues His64, Asp107, and Ser108.

It belongs to the lipid A palmitoyltransferase family. As to quaternary structure, homodimer.

The protein localises to the cell outer membrane. It carries out the reaction a lipid A + a 1,2-diacyl-sn-glycero-3-phosphocholine = a hepta-acyl lipid A + a 2-acyl-sn-glycero-3-phosphocholine. The enzyme catalyses a lipid IVA + a 1,2-diacyl-sn-glycero-3-phosphocholine = a lipid IVB + a 2-acyl-sn-glycero-3-phosphocholine. It catalyses the reaction a lipid IIA + a 1,2-diacyl-sn-glycero-3-phosphocholine = a lipid IIB + a 2-acyl-sn-glycero-3-phosphocholine. In terms of biological role, transfers a fatty acid residue from the sn-1 position of a phospholipid to the N-linked hydroxyfatty acid chain on the proximal unit of lipid A or its precursors. This chain is Lipid A acyltransferase PagP, found in Cronobacter sakazakii (strain ATCC BAA-894) (Enterobacter sakazakii).